The chain runs to 158 residues: Transcriptional repressor NrdR (158 aa).

A zinc finger spans residues 3–34 (CPSCQNTDSRVLESRAADAGRSVRRRRECLHC). The region spanning 49 to 139 (ITVLKRNGNR…VYRHFRGIND (91 aa)) is the ATP-cone domain.

The protein belongs to the NrdR family. The cofactor is Zn(2+).

Its function is as follows. Negatively regulates transcription of bacterial ribonucleotide reductase nrd genes and operons by binding to NrdR-boxes. The polypeptide is Transcriptional repressor NrdR (Prochlorococcus marinus (strain MIT 9303)).